The following is a 126-amino-acid chain: Histone H2B-alpha (126 aa).

The tract at residues 1–34 (MSAAEKKPASKAPAGKAPRDTMKSADKKRGKNRK) is disordered. Residues lysine 6 and lysine 7 each carry the N6-acetyllysine; alternate modification. Glycyl lysine isopeptide (Lys-Gly) (interchain with G-Cter in SUMO); alternate cross-links involve residues lysine 6 and lysine 7. Position 10 is a phosphoserine (serine 10). At lysine 11 the chain carries N6-acetyllysine. The segment covering 17 to 27 (APRDTMKSADK) has biased composition (basic and acidic residues). Lysine 120 is covalently cross-linked (Glycyl lysine isopeptide (Lys-Gly) (interchain with G-Cter in ubiquitin)).

The protein belongs to the histone H2B family. As to quaternary structure, the nucleosome is a histone octamer containing two molecules each of H2A, H2B, H3 and H4 assembled in one H3-H4 heterotetramer and two H2A-H2B heterodimers. The octamer wraps approximately 147 bp of DNA. Interacts with rik1. Post-translationally, monoubiquitinated by the rhp6/ubc2-bre1 complex to form H2BK123ub1. H2BK123ub1 gives a specific tag for epigenetic transcriptional activation and is also prerequisite for H3K4me and H3K79me formation. H2BK123ub1 also modulates the formation of double-strand breaks during meiosis and is a prerequisite for DNA-damage checkpoint activation. Phosphorylated by shk1 to form H2BS10ph during progression through meiotic prophase. May be correlated with chromosome condensation. In terms of processing, acetylation of N-terminal lysines and particularly formation of H2BK11ac has a positive effect on transcription. Post-translationally, sumoylation to form H2BK6su or H2BK7su occurs preferentially near the telomeres and represses gene transcription.

It is found in the nucleus. The protein localises to the chromosome. In terms of biological role, core component of nucleosome. Nucleosomes wrap and compact DNA into chromatin, limiting DNA accessibility to the cellular machineries which require DNA as a template. Histones thereby play a central role in transcription regulation, DNA repair, DNA replication and chromosomal stability. DNA accessibility is regulated via a complex set of post-translational modifications of histones, also called histone code, and nucleosome remodeling. In Schizosaccharomyces pombe (strain 972 / ATCC 24843) (Fission yeast), this protein is Histone H2B-alpha (htb1).